Reading from the N-terminus, the 229-residue chain is Putative N-acetylmannosamine-6-phosphate 2-epimerase (229 aa).

Belongs to the NanE family.

The catalysed reaction is an N-acyl-D-glucosamine 6-phosphate = an N-acyl-D-mannosamine 6-phosphate. Its pathway is amino-sugar metabolism; N-acetylneuraminate degradation; D-fructose 6-phosphate from N-acetylneuraminate: step 3/5. Its function is as follows. Converts N-acetylmannosamine-6-phosphate (ManNAc-6-P) to N-acetylglucosamine-6-phosphate (GlcNAc-6-P). This Haemophilus ducreyi (strain 35000HP / ATCC 700724) protein is Putative N-acetylmannosamine-6-phosphate 2-epimerase.